Reading from the N-terminus, the 218-residue chain is Glutathione S-transferase A (218 aa).

Position 1 is an N-acetylserine (S1). The 81-residue stretch at 2 to 82 folds into the GST N-terminal domain; it reads GKPVLHYFNV…YIATKYNLYG (81 aa). K3 is subject to N6-succinyllysine. Glutathione is bound by residues Y8, K44, 53–54, and 66–67; these read QV and QS. A GST C-terminal domain is found at 84–206; that stretch reads DTKERLLIDM…LQPGSQRKPF (123 aa).

Belongs to the GST superfamily. Alpha family. As to quaternary structure, homodimer or heterodimer of GSTA1 and GSTA2.

The protein localises to the cytoplasm. It catalyses the reaction RX + glutathione = an S-substituted glutathione + a halide anion + H(+). It carries out the reaction prostaglandin A2 + glutathione = prostaglandin A2-S-(R)-glutathione. The catalysed reaction is prostaglandin J2 + glutathione = prostaglandin J2-S-(R)-glutathione. The enzyme catalyses (13S)-hydroperoxy-(9Z,11E)-octadecadienoate + 2 glutathione = (13S)-hydroxy-(9Z,11E)-octadecadienoate + glutathione disulfide + H2O. It catalyses the reaction androst-5-ene-3,17-dione = androst-4-ene-3,17-dione. Glutathione S-transferase that catalyzes the nucleophilic attack of the sulfur atom of glutathione on the electrophilic groups of a wide range of exogenous and endogenous compounds. Involved in the formation of glutathione conjugates of both prostaglandin A2 (PGA2) and prostaglandin J2 (PGJ2). It also catalyzes the isomerization of D5-androstene-3,17-dione (AD) into D4-androstene-3,17-dione and may therefore play an important role in hormone biosynthesis. Through its glutathione-dependent peroxidase activity toward the fatty acid hydroperoxide (13S)-hydroperoxy-(9Z,11E)-octadecadienoate/13-HPODE it is also involved in the metabolism of oxidized linoleic acid. In Cavia porcellus (Guinea pig), this protein is Glutathione S-transferase A.